The chain runs to 243 residues: Adenosylcobinamide-GDP ribazoletransferase (243 aa).

5 helical membrane passes run 31-51 (LLFYPLVGAVFGTLLLGFNTL), 55-75 (APLMLHAALVLTAWVLLSGGL), 109-129 (IAVVTLVLVLLLKFAAILALI), 133-153 (ASVWLLLAPVIGRAAMLGLFL), and 188-208 (VLLAGWSGVAVLLVCAVCFFW).

It belongs to the CobS family. The cofactor is Mg(2+).

The protein resides in the cell inner membrane. It carries out the reaction alpha-ribazole + adenosylcob(III)inamide-GDP = adenosylcob(III)alamin + GMP + H(+). It catalyses the reaction alpha-ribazole 5'-phosphate + adenosylcob(III)inamide-GDP = adenosylcob(III)alamin 5'-phosphate + GMP + H(+). It participates in cofactor biosynthesis; adenosylcobalamin biosynthesis; adenosylcobalamin from cob(II)yrinate a,c-diamide: step 7/7. Functionally, joins adenosylcobinamide-GDP and alpha-ribazole to generate adenosylcobalamin (Ado-cobalamin). Also synthesizes adenosylcobalamin 5'-phosphate from adenosylcobinamide-GDP and alpha-ribazole 5'-phosphate. In Pseudomonas syringae pv. syringae (strain B728a), this protein is Adenosylcobinamide-GDP ribazoletransferase.